We begin with the raw amino-acid sequence, 843 residues long: Histone-lysine N-methyltransferase PRDM9 (843 aa).

Residues 23–86 enclose the KRAB-related domain; the sequence is KVKDEFKDIS…QRQAMKPQIN (64 aa). 2 disordered regions span residues 85-104 and 110-170; these read INDS…VSPP and VKHS…KKLK. Positions 205, 208, 216, and 219 each coordinate Zn(2+). The SET domain maps to 244 to 358; sequence PGLRISPSGI…PGCELLVWYG (115 aa). S-adenosyl-L-methionine-binding positions include 256 to 258, Tyr-291, and 320 to 321; these read AGL and NC. Residue 288-294 coordinates substrate; the sequence is NSGYSWL. Tyr-357 is a binding site for substrate. Position 368 is an N6,N6,N6-trimethyllysine; alternate (Lys-368). N6-methyllysine; alternate is present on Lys-368. N6-methyllysine occurs at positions 372 and 374. The segment at 388–411 adopts a C2H2-type 1 zinc-finger fold; that stretch reads HPCLLCSLAFSSQKFLTQHMEWNH. Zn(2+) is bound by residues Cys-390, Cys-393, His-406, and His-411. Positions 418–493 are disordered; sequence GTSARINPKP…VEELRTGQTT (76 aa). A compositionally biased stretch (basic and acidic residues) spans 436 to 454; the sequence is QEQHVDSQNKNDKASNEVK. Residues 462 to 472 show a composition bias toward polar residues; sequence RISTTFPSTLK. Residues 473–488 are compositionally biased toward basic and acidic residues; the sequence is EQMRSEESKRTVEELR. Residues 513–531 form a C2H2-type 2; degenerate zinc finger; it reads QCGQYFSDKSNVNEHQKTH. 11 C2H2-type zinc fingers span residues 537-559, 565-587, 593-615, 621-643, 649-671, 677-699, 705-727, 733-755, 761-783, 789-811, and 817-839; these read YVCR…QRTH. The Zn(2+) site is built by Cys-707, Cys-710, His-723, His-727, Cys-735, Cys-738, His-751, His-755, Cys-763, Cys-766, His-779, His-783, Cys-791, Cys-794, His-807, and His-811. The segment at 715-805 is DNA-binding; the sequence is TAKSNLIQHQ…RGFTQKSNLI (91 aa).

This sequence belongs to the class V-like SAM-binding methyltransferase superfamily. In terms of assembly, homodimer. Interacts with EHMT2 and CDYL; interaction only takes place when PRDM9 is bound to hotspot DNA. Interacts with CXXC1; this interaction does not link PRDM9-activated recombination hotspot sites with DSB machinery and is not required for the hotspot recognition pathway. Forms a complex with EWSR1, REC8, SYCP3 and SYCP1; complex formation is dependent of phosphorylated form of REC8 and requires PRDM9 bound to hotspot DNA; EWSR1 joins PRDM9 with the chromosomal axis through REC8. In terms of processing, mono-methylated; automethylated. Tri-methylated; automethylated. Mono-methylation is predominant; automethylation is lower and slower than H3 peptide methylation and is in a highest S-adenosyl-L-methionine concentration-dependent. There are two major sites for automethylation at Lys-368 and Lys-374. Lysines can be simultaneously methylated, such as Lys-368(me3)/Lys-372(me1), Lys-368(me1)/Lys-374(me1) and Lys-368(me1)/Lys-372(me1)/Lys-374(me1). Automethylation is an intramolecular (cis) process. As to expression, specifically expressed in germ cells entering meiotic prophase in female fetal gonads and in postnatal testis. Expressed in early meiotic prophase.

The protein resides in the nucleus. It localises to the chromosome. The catalysed reaction is L-lysyl-[protein] + S-adenosyl-L-methionine = N(6)-methyl-L-lysyl-[protein] + S-adenosyl-L-homocysteine + H(+). It carries out the reaction N(6),N(6)-dimethyl-L-lysyl-[protein] + S-adenosyl-L-methionine = N(6),N(6),N(6)-trimethyl-L-lysyl-[protein] + S-adenosyl-L-homocysteine + H(+). It catalyses the reaction L-lysyl(4)-[histone H3] + 3 S-adenosyl-L-methionine = N(6),N(6),N(6)-trimethyl-L-lysyl(4)-[histone H3] + 3 S-adenosyl-L-homocysteine + 3 H(+). The enzyme catalyses L-lysyl(36)-[histone H3] + 3 S-adenosyl-L-methionine = N(6),N(6),N(6)-trimethyl-L-lysyl(36)-[histone H3] + 3 S-adenosyl-L-homocysteine + 3 H(+). The catalysed reaction is L-lysyl(9)-[histone H3] + 3 S-adenosyl-L-methionine = N(6),N(6),N(6)-trimethyl-L-lysyl(9)-[histone H3] + 3 S-adenosyl-L-homocysteine + 3 H(+). It carries out the reaction L-lysyl(20)-[histone H4] + S-adenosyl-L-methionine = N(6)-methyl-L-lysyl(20)-[histone H4] + S-adenosyl-L-homocysteine + H(+). It catalyses the reaction N(6)-methyl-L-lysyl(20)-[histone H4] + S-adenosyl-L-methionine = N(6),N(6)-dimethyl-L-lysyl(20)-[histone H4] + S-adenosyl-L-homocysteine + H(+). Histone methyltransferase that sequentially mono-, di-, and tri-methylates both 'Lys-4' (H3K4) and 'Lys-36' (H3K36) of histone H3 to produce respectively trimethylated 'Lys-4' (H3K4me3) and trimethylated 'Lys-36' (H3K36me3) histone H3 and plays a key role in meiotic prophase by determining hotspot localization thereby promoting meiotic recombination. Can also methylate all four core histones with H3 being the best substrate and the most highly modified. Is also able, on one hand, to mono and di-methylate H4K20 and on other hand to trimethylate H3K9 with the di-methylated H3K9 as the best substrate. During meiotic prophase, binds specific DNA sequences through its zinc finger domains thereby determining hotspot localization where it promotes local H3K4me3 and H3K36me3 enrichment on the same nucleosomes through its histone methyltransferase activity. Thereby promotes double-stranded breaks (DSB) formation, at this subset of PRDM9-binding sites, that initiates meiotic recombination for the proper meiotic progression. During meiotic progression hotspot-bound PRDM9 interacts with several complexes; in early leptonema binds CDYL and EHMT2 followed by EWSR1 and CXXC1 by the end of leptonema. EWSR1 joins PRDM9 with the chromosomal axis through REC8. In this way, controls the DSB repair pathway, pairing of homologous chromosomes and sex body formation. Moreover plays a central role in the transcriptional activation of genes during early meiotic prophase thanks to H3K4me3 and H3K36me3 enrichment that represents a specific tag for epigenetic transcriptional activation. In addition performs automethylation. Acetylation and phosphorylation of histone H3 attenuate or prevent histone H3 methylation. This chain is Histone-lysine N-methyltransferase PRDM9, found in Mus musculus (Mouse).